Reading from the N-terminus, the 117-residue chain is Immunoglobulin lambda variable 1-44 (117 aa).

The first 19 residues, 1-19 (MASFPLLLTLLTHCAGSWA), serve as a signal peptide directing secretion. The residue at position 20 (Gln-20) is a Pyrrolidone carboxylic acid. The segment at 20–44 (QSVLTQPPSASGTPGQRVTISCSGS) is framework-1. An Ig-like domain is found at 20–117 (QSVLTQPPSA…CAAWDDSLNG (98 aa)). Over residues 24 to 35 (TQPPSASGTPGQ) the composition is skewed to polar residues. The interval 24–45 (TQPPSASGTPGQRVTISCSGSS) is disordered. Cys-41 and Cys-108 are joined by a disulfide. The segment at 45 to 52 (SSNIGSNT) is complementarity-determining-1. Positions 53–69 (VNWYQQLPGTAPKLLIY) are framework-2. A complementarity-determining-2 region spans residues 70–72 (SNN). The framework-3 stretch occupies residues 73-108 (QRPSGVPDRFSGSKSGTSASLAISGLQSEDEADYYC). The segment at 109–117 (AAWDDSLNG) is complementarity-determining-3.

Immunoglobulins are composed of two identical heavy chains and two identical light chains; disulfide-linked.

The protein localises to the secreted. It localises to the cell membrane. Its function is as follows. V region of the variable domain of immunoglobulin light chains that participates in the antigen recognition. Immunoglobulins, also known as antibodies, are membrane-bound or secreted glycoproteins produced by B lymphocytes. In the recognition phase of humoral immunity, the membrane-bound immunoglobulins serve as receptors which, upon binding of a specific antigen, trigger the clonal expansion and differentiation of B lymphocytes into immunoglobulins-secreting plasma cells. Secreted immunoglobulins mediate the effector phase of humoral immunity, which results in the elimination of bound antigens. The antigen binding site is formed by the variable domain of one heavy chain, together with that of its associated light chain. Thus, each immunoglobulin has two antigen binding sites with remarkable affinity for a particular antigen. The variable domains are assembled by a process called V-(D)-J rearrangement and can then be subjected to somatic hypermutations which, after exposure to antigen and selection, allow affinity maturation for a particular antigen. The protein is Immunoglobulin lambda variable 1-44 of Homo sapiens (Human).